A 466-amino-acid chain; its full sequence is Argininosuccinate lyase 1 (466 aa).

The protein belongs to the lyase 1 family. Argininosuccinate lyase subfamily.

The protein resides in the cytoplasm. It carries out the reaction 2-(N(omega)-L-arginino)succinate = fumarate + L-arginine. It participates in amino-acid biosynthesis; L-arginine biosynthesis; L-arginine from L-ornithine and carbamoyl phosphate: step 3/3. The polypeptide is Argininosuccinate lyase 1 (Mesorhizobium japonicum (strain LMG 29417 / CECT 9101 / MAFF 303099) (Mesorhizobium loti (strain MAFF 303099))).